Here is a 146-residue protein sequence, read N- to C-terminus: D-aminoacyl-tRNA deacylase (146 aa).

The Gly-cisPro motif, important for rejection of L-amino acids motif lies at 137–138; that stretch reads GP.

The protein belongs to the DTD family. As to quaternary structure, homodimer.

The protein localises to the cytoplasm. The catalysed reaction is glycyl-tRNA(Ala) + H2O = tRNA(Ala) + glycine + H(+). It carries out the reaction a D-aminoacyl-tRNA + H2O = a tRNA + a D-alpha-amino acid + H(+). Its function is as follows. An aminoacyl-tRNA editing enzyme that deacylates mischarged D-aminoacyl-tRNAs. Also deacylates mischarged glycyl-tRNA(Ala), protecting cells against glycine mischarging by AlaRS. Acts via tRNA-based rather than protein-based catalysis; rejects L-amino acids rather than detecting D-amino acids in the active site. By recycling D-aminoacyl-tRNA to D-amino acids and free tRNA molecules, this enzyme counteracts the toxicity associated with the formation of D-aminoacyl-tRNA entities in vivo and helps enforce protein L-homochirality. This chain is D-aminoacyl-tRNA deacylase, found in Deinococcus deserti (strain DSM 17065 / CIP 109153 / LMG 22923 / VCD115).